The sequence spans 190 residues: UPF0301 protein Pfl01_5311 (190 aa).

Belongs to the UPF0301 (AlgH) family.

The chain is UPF0301 protein Pfl01_5311 from Pseudomonas fluorescens (strain Pf0-1).